A 197-amino-acid polypeptide reads, in one-letter code: Glycerol-3-phosphate acyltransferase (197 aa).

Transmembrane regions (helical) follow at residues 7-27 (PSIA…LLLT), 56-76 (LAAL…WIAW), 82-102 (DIGW…WLGF), 116-136 (FGLG…MLAI), and 157-177 (YFGR…IIWL).

It belongs to the PlsY family. As to quaternary structure, probably interacts with PlsX.

The protein localises to the cell inner membrane. The catalysed reaction is an acyl phosphate + sn-glycerol 3-phosphate = a 1-acyl-sn-glycero-3-phosphate + phosphate. It functions in the pathway lipid metabolism; phospholipid metabolism. In terms of biological role, catalyzes the transfer of an acyl group from acyl-phosphate (acyl-PO(4)) to glycerol-3-phosphate (G3P) to form lysophosphatidic acid (LPA). This enzyme utilizes acyl-phosphate as fatty acyl donor, but not acyl-CoA or acyl-ACP. This Erythrobacter litoralis (strain HTCC2594) protein is Glycerol-3-phosphate acyltransferase.